A 320-amino-acid chain; its full sequence is Polynucleotide 5'-triphosphatase CTL1 (320 aa).

The span at 1–12 (MSDQPETPSNSR) shows a compositional bias: polar residues. The disordered stretch occupies residues 1-23 (MSDQPETPSNSRNSHENVGAKKA). Over residues 13 to 23 (NSHENVGAKKA) the composition is skewed to basic and acidic residues.

This sequence belongs to the fungal TPase family. The cofactor is Mg(2+). Requires Mn(2+) as cofactor.

The protein resides in the cytoplasm. Its subcellular location is the nucleus. The enzyme catalyses a 5'-end triphospho-ribonucleoside in mRNA + H2O = a 5'-end diphospho-ribonucleoside in mRNA + phosphate + H(+). Functionally, probably involved in an RNA processing event other than mRNA capping. Releases gamma-phosphate from the 5'-end of RNA to produce a diphosphate terminus. The chain is Polynucleotide 5'-triphosphatase CTL1 from Saccharomyces cerevisiae (strain ATCC 204508 / S288c) (Baker's yeast).